Consider the following 777-residue polypeptide: Intraflagellar transport protein 80 homolog (777 aa).

WD repeat units lie at residues 12 to 50 (KHQE…TSLI), 104 to 143 (AHCG…RSTL), 145 to 185 (QQGT…LQWK), 186 to 225 (AHDG…LYGS), 227 to 265 (PHEH…YALE), 267 to 306 (PNTG…WEWK), and 504 to 542 (KLGT…YVDR).

In terms of assembly, component of the IFT complex B, at least composed of IFT20, IFT22, IFT25, IFT27, IFT46, IFT52, TRAF3IP1/IFT54, IFT57, IFT74, IFT80, IFT81, and IFT88. Interacts with IFT88. Interacts with IFT57 and IFT70B.

It is found in the cytoplasm. Its subcellular location is the cytoskeleton. The protein resides in the cilium basal body. It localises to the cilium axoneme. Its function is as follows. Component of the intraflagellar transport (IFT) complex B, which is essential for the development and maintenance of motile and sensory cilia. This chain is Intraflagellar transport protein 80 homolog (Ift80), found in Mus musculus (Mouse).